A 210-amino-acid chain; its full sequence is Large ribosomal subunit protein uL3 (210 aa).

This sequence belongs to the universal ribosomal protein uL3 family. In terms of assembly, part of the 50S ribosomal subunit. Forms a cluster with proteins L14 and L19.

Its function is as follows. One of the primary rRNA binding proteins, it binds directly near the 3'-end of the 23S rRNA, where it nucleates assembly of the 50S subunit. In Syntrophotalea carbinolica (strain DSM 2380 / NBRC 103641 / GraBd1) (Pelobacter carbinolicus), this protein is Large ribosomal subunit protein uL3.